Here is a 405-residue protein sequence, read N- to C-terminus: CMP-sialic acid transporter 4 (405 aa).

Topologically, residues 1–43 are cytoplasmic; the sequence is MQRNGVMECSVCHSKVVAPSPRSVSRAYDKHRSKISSKYRALN. The chain crosses the membrane as a helical span at residues 44-64; it reads FLLVSGDCILVGLQPILVFMS. The Lumenal portion of the chain corresponds to 65–74; that stretch reads KVDGKFQFSP. Residues 75-95 traverse the membrane as a helical segment; sequence ISVNFLTEVTKVIFAIVMLII. Topologically, residues 96–121 are cytoplasmic; it reads QSRKQKVGEKPLLSLSTFVQAARNNA. The helical transmembrane segment at 122–142 threads the bilayer; the sequence is LLAVPALLYAINNYLKFIMQL. Position 143 (tyrosine 143) is a topological domain, lumenal. A helical transmembrane segment spans residues 144 to 164; sequence FSPATVKMLSNLKVLVIAILL. Residues 165–171 are Cytoplasmic-facing; sequence KFIMRRK. The helical transmembrane segment at 172–192 threads the bilayer; the sequence is FSIIQWEALALLLIGISVNQL. Topologically, residues 193–203 are lumenal; that stretch reads SSIPDGTKSFG. Residues 204 to 224 form a helical membrane-spanning segment; that stretch reads LAVTTIAYIYTLIFVTVPSLA. The Cytoplasmic portion of the chain corresponds to 225–244; that stretch reads SVYNEYALKSQFDTSIYLQN. The helical transmembrane segment at 245–265 threads the bilayer; that stretch reads LFLYGYGAIFNFLGILGTVIF. Residues 266–281 are Lumenal-facing; the sequence is QGPESFDILRGHSRAT. The helical transmembrane segment at 282–302 threads the bilayer; sequence MFLICNNAAQGILSSFFFKYA. The Cytoplasmic segment spans residues 303–322; it reads DTILKKYSSTVATIFTGLAS. A helical membrane pass occupies residues 323–343; the sequence is AAFLGHTLTVNFLLGISIVFI. At 344–405 the chain is on the lumenal side; it reads SMHQFFSPLA…TDERKPLLPI (62 aa).

It belongs to the nucleotide-sugar transporter family. CMP-Sialate:CMP antiporter (TC 2.A.7.12) subfamily.

The protein localises to the golgi apparatus membrane. Its function is as follows. Sugar transporter involved in the transport of CMP-sialic acid from the cytoplasm into the Golgi. May transport important nucleotide sugars such as CMP-Kdo (2-keto-3-deoxy-D-manno-octulosonic acid) in physiological conditions. The protein is CMP-sialic acid transporter 4 of Oryza sativa subsp. japonica (Rice).